We begin with the raw amino-acid sequence, 216 residues long: GTP cyclohydrolase 1 (216 aa).

3 residues coordinate Zn(2+): Cys-108, His-111, and Cys-179.

This sequence belongs to the GTP cyclohydrolase I family. Toroid-shaped homodecamer, composed of two pentamers of five dimers.

The catalysed reaction is GTP + H2O = 7,8-dihydroneopterin 3'-triphosphate + formate + H(+). It functions in the pathway cofactor biosynthesis; 7,8-dihydroneopterin triphosphate biosynthesis; 7,8-dihydroneopterin triphosphate from GTP: step 1/1. The sequence is that of GTP cyclohydrolase 1 from Shewanella amazonensis (strain ATCC BAA-1098 / SB2B).